The primary structure comprises 175 residues: UPF0398 protein SSA_1858 (175 aa).

Belongs to the UPF0398 family.

This chain is UPF0398 protein SSA_1858, found in Streptococcus sanguinis (strain SK36).